The sequence spans 411 residues: 2,3-bisphosphoglycerate-independent phosphoglycerate mutase (411 aa).

This sequence belongs to the BPG-independent phosphoglycerate mutase family. A-PGAM subfamily.

The enzyme catalyses (2R)-2-phosphoglycerate = (2R)-3-phosphoglycerate. It functions in the pathway carbohydrate degradation; glycolysis; pyruvate from D-glyceraldehyde 3-phosphate: step 3/5. Catalyzes the interconversion of 2-phosphoglycerate and 3-phosphoglycerate. In Pyrobaculum islandicum (strain DSM 4184 / JCM 9189 / GEO3), this protein is 2,3-bisphosphoglycerate-independent phosphoglycerate mutase.